The sequence spans 225 residues: Methylthioribulose-1-phosphate dehydratase (225 aa).

Residues His-106 and His-108 each contribute to the Zn(2+) site.

The protein belongs to the aldolase class II family. MtnB subfamily. Zn(2+) is required as a cofactor.

It carries out the reaction 5-(methylsulfanyl)-D-ribulose 1-phosphate = 5-methylsulfanyl-2,3-dioxopentyl phosphate + H2O. It participates in amino-acid biosynthesis; L-methionine biosynthesis via salvage pathway; L-methionine from S-methyl-5-thio-alpha-D-ribose 1-phosphate: step 2/6. Catalyzes the dehydration of methylthioribulose-1-phosphate (MTRu-1-P) into 2,3-diketo-5-methylthiopentyl-1-phosphate (DK-MTP-1-P). The sequence is that of Methylthioribulose-1-phosphate dehydratase from Xanthomonas oryzae pv. oryzae (strain PXO99A).